A 508-amino-acid chain; its full sequence is Photosystem II CP47 reaction center protein (508 aa).

Transmembrane regions (helical) follow at residues 21–36 (AVHL…WAGS), 101–115 (IVLS…IWHW), 140–156 (GIHL…FGAF), 203–218 (IAAG…FHLS), 237–252 (VLSS…AFVV), and 457–472 (CFAL…HGSR).

The protein belongs to the PsbB/PsbC family. PsbB subfamily. PSII is composed of 1 copy each of membrane proteins PsbA, PsbB, PsbC, PsbD, PsbE, PsbF, PsbH, PsbI, PsbJ, PsbK, PsbL, PsbM, PsbT, PsbX, PsbY, PsbZ, Psb30/Ycf12, at least 3 peripheral proteins of the oxygen-evolving complex and a large number of cofactors. It forms dimeric complexes. The cofactor is Binds multiple chlorophylls. PSII binds additional chlorophylls, carotenoids and specific lipids..

The protein localises to the plastid. It localises to the chloroplast thylakoid membrane. Its function is as follows. One of the components of the core complex of photosystem II (PSII). It binds chlorophyll and helps catalyze the primary light-induced photochemical processes of PSII. PSII is a light-driven water:plastoquinone oxidoreductase, using light energy to abstract electrons from H(2)O, generating O(2) and a proton gradient subsequently used for ATP formation. This chain is Photosystem II CP47 reaction center protein, found in Zygnema circumcarinatum (Green alga).